The chain runs to 378 residues: MQSLKKYRRITVKIGSALLVDRASGLKRDWLDSLADDIAVLAQGGAEILVVSSGAIALGRTILGLGKRALKLEESQAAAAVGQIALAGAWSDALGRGALKSGQILLTLGDTEERRRYLNARATISTLLKMKAVPVINENDTVATSEIRYGDNDRLAARVATMMGADLLVLLSDIDGLYTAPPARDPKAKFIPVVDRITPDIEAMAGAAASELSRGGMRTKLDAGKIATAAGTAMIITSGTRLSPLMAIERGERATFFRPSANPVKGYKTWIAGQLEPAGRLTVDAGAVGALASGKSLLPAGVKLVSGNFSRGDTVAILSPDGREIARGLVAYDAADAVRIAGLKTAEIETVLGYEARSAMIHRDDLVVSHAGGDISGG.

Lys-13 contributes to the ATP binding site. Ser-53, Asp-140, and Asn-152 together coordinate substrate. 172–173 (SD) lines the ATP pocket. The PUA domain occupies 278-355 (AGRLTVDAGA…AEIETVLGYE (78 aa)).

The protein belongs to the glutamate 5-kinase family.

It is found in the cytoplasm. It catalyses the reaction L-glutamate + ATP = L-glutamyl 5-phosphate + ADP. It participates in amino-acid biosynthesis; L-proline biosynthesis; L-glutamate 5-semialdehyde from L-glutamate: step 1/2. In terms of biological role, catalyzes the transfer of a phosphate group to glutamate to form L-glutamate 5-phosphate. In Mesorhizobium japonicum (strain LMG 29417 / CECT 9101 / MAFF 303099) (Mesorhizobium loti (strain MAFF 303099)), this protein is Glutamate 5-kinase 1.